The chain runs to 51 residues: Protein YrhD (51 aa).

The chain is Protein YrhD (yrhD) from Escherichia coli (strain K12).